The chain runs to 107 residues: Large ribosomal subunit protein uL24 (107 aa).

This sequence belongs to the universal ribosomal protein uL24 family. As to quaternary structure, part of the 50S ribosomal subunit.

In terms of biological role, one of two assembly initiator proteins, it binds directly to the 5'-end of the 23S rRNA, where it nucleates assembly of the 50S subunit. Its function is as follows. One of the proteins that surrounds the polypeptide exit tunnel on the outside of the subunit. The sequence is that of Large ribosomal subunit protein uL24 from Pelotomaculum thermopropionicum (strain DSM 13744 / JCM 10971 / SI).